Consider the following 141-residue polypeptide: Hemoglobin subunit alpha (141 aa).

Residues 1 to 141 (VLSPADKTNI…VSTVLVSKYR (141 aa)) enclose the Globin domain. Ser-3 carries the phosphoserine modification. Position 7 is an N6-succinyllysine (Lys-7). Residue Thr-8 is modified to Phosphothreonine. Lys-11 is subject to N6-succinyllysine. Lys-16 carries the N6-acetyllysine; alternate modification. An N6-succinyllysine; alternate modification is found at Lys-16. A Phosphotyrosine modification is found at Tyr-24. Ser-35 is subject to Phosphoserine. Lys-40 is modified (N6-succinyllysine). At Ser-49 the chain carries Phosphoserine. Residue His-58 participates in O2 binding. His-87 contributes to the heme b binding site. Ser-102 bears the Phosphoserine mark. Thr-108 carries the post-translational modification Phosphothreonine. Phosphoserine is present on residues Ser-124 and Ser-131. Thr-134 is subject to Phosphothreonine. Phosphoserine is present on Ser-138.

The protein belongs to the globin family. As to quaternary structure, heterotetramer of two alpha chains and two beta chains. In terms of tissue distribution, red blood cells.

In terms of biological role, involved in oxygen transport from the lung to the various peripheral tissues. Functionally, hemopressin acts as an antagonist peptide of the cannabinoid receptor CNR1. Hemopressin-binding efficiently blocks cannabinoid receptor CNR1 and subsequent signaling. This is Hemoglobin subunit alpha (HBA) from Myotis velifer (Mouse-eared bat).